The primary structure comprises 25 residues: Alpha-amylase inhibitor (25 aa).

In terms of assembly, monomer or homodimer. May exist both in a glycosylated and in an unglycosylated form.

Its subcellular location is the secreted. Functionally, inhibits alpha-amylases but not trypsin. Is more effective against insect alpha-amylases than those of mammals. In Secale cereale (Rye), this protein is Alpha-amylase inhibitor.